The following is a 526-amino-acid chain: Chaperonin GroEL 2 (526 aa).

Positions 50, 413, and 494 each coordinate ATP.

It belongs to the chaperonin (HSP60) family. Forms a cylinder of 14 subunits composed of two heptameric rings stacked back-to-back. Interacts with the co-chaperonin GroES.

Its subcellular location is the cytoplasm. It catalyses the reaction ATP + H2O + a folded polypeptide = ADP + phosphate + an unfolded polypeptide.. Its function is as follows. Together with its co-chaperonin GroES, plays an essential role in assisting protein folding. The GroEL-GroES system forms a nano-cage that allows encapsulation of the non-native substrate proteins and provides a physical environment optimized to promote and accelerate protein folding. The chain is Chaperonin GroEL 2 from Chlamydia pneumoniae (Chlamydophila pneumoniae).